The primary structure comprises 147 residues: 3-hydroxyacyl-[acyl-carrier-protein] dehydratase FabZ (147 aa).

Histidine 53 is an active-site residue.

The protein belongs to the thioester dehydratase family. FabZ subfamily.

It localises to the cytoplasm. The catalysed reaction is a (3R)-hydroxyacyl-[ACP] = a (2E)-enoyl-[ACP] + H2O. Its function is as follows. Involved in unsaturated fatty acids biosynthesis. Catalyzes the dehydration of short chain beta-hydroxyacyl-ACPs and long chain saturated and unsaturated beta-hydroxyacyl-ACPs. This chain is 3-hydroxyacyl-[acyl-carrier-protein] dehydratase FabZ, found in Synechococcus sp. (strain WH7803).